Reading from the N-terminus, the 462-residue chain is Fumarate hydratase class II (462 aa).

Substrate is bound by residues 97-99 (SGT), 127-130 (HPND), 137-139 (SSN), and Thr-185. His-186 (proton donor/acceptor) is an active-site residue. Residue Ser-316 is part of the active site. Residues Ser-317 and 322–324 (KVN) contribute to the substrate site.

It belongs to the class-II fumarase/aspartase family. Fumarase subfamily. Homotetramer.

Its subcellular location is the cytoplasm. The catalysed reaction is (S)-malate = fumarate + H2O. Its pathway is carbohydrate metabolism; tricarboxylic acid cycle; (S)-malate from fumarate: step 1/1. Its function is as follows. Involved in the TCA cycle. Catalyzes the stereospecific interconversion of fumarate to L-malate. The sequence is that of Fumarate hydratase class II from Bacillus subtilis (strain 168).